Here is a 265-residue protein sequence, read N- to C-terminus: 3-deoxy-manno-octulosonate cytidylyltransferase (265 aa).

The protein belongs to the KdsB family.

It localises to the cytoplasm. It carries out the reaction 3-deoxy-alpha-D-manno-oct-2-ulosonate + CTP = CMP-3-deoxy-beta-D-manno-octulosonate + diphosphate. Its pathway is nucleotide-sugar biosynthesis; CMP-3-deoxy-D-manno-octulosonate biosynthesis; CMP-3-deoxy-D-manno-octulosonate from 3-deoxy-D-manno-octulosonate and CTP: step 1/1. It participates in bacterial outer membrane biogenesis; lipopolysaccharide biosynthesis. Activates KDO (a required 8-carbon sugar) for incorporation into bacterial lipopolysaccharide in Gram-negative bacteria. The protein is 3-deoxy-manno-octulosonate cytidylyltransferase of Delftia acidovorans (strain DSM 14801 / SPH-1).